The following is a 509-amino-acid chain: MEEFKRYLELDRSQQHDFLYPLIFQEYIYALAHDHSLTTSSSLELEKAGYENNSSLLIVKRLIIHLITQMDHFGFFTNYSSQNPFLGHNTTLYSQILLEGFVVVVEIPFSIRIISSLDLEGKEIVKSHNFRSIHSIFPFLEDKFSHLNYVLDLLIPHSIHLEILVQTFRYWVKDASSLHLLRTFLHKYHNWTNLITPKKSRFSFSKQNKRFLFFFSNFHVYEYESILAFLRNQSSHLHSKSYRPFLDRIYFYEKRDHFVKVFTKYFQAILWSFKDPFMHYVRYQGKALLASKGTFLLMNKWNYYLVNFWQCYFYMWSQPGRIHINKLSNHYLELLGYLSSVGLNSSMVRNQMLENSFLIANVSKKFDMIVPIIPLIRSLSKAKFCNLLGHPISKPVWADLSDSDIIDRFGSIYRNISHYYSGSSKKMSLYRIKYIIKLSCARTLARKHKSTVRAFLKRVGSELLEEFFFEDEFIFSLTFPKASSSSGGLYRTRIWYLDIFCIHDLANYE.

The protein belongs to the intron maturase 2 family. MatK subfamily.

It localises to the plastid. Its subcellular location is the chloroplast. Its function is as follows. Usually encoded in the trnK tRNA gene intron. Probably assists in splicing its own and other chloroplast group II introns. This Hottonia palustris (Water-violet) protein is Maturase K.